A 248-amino-acid polypeptide reads, in one-letter code: Sugar fermentation stimulation protein homolog (248 aa).

It belongs to the SfsA family.

The sequence is that of Sugar fermentation stimulation protein homolog from Methylorubrum extorquens (strain CM4 / NCIMB 13688) (Methylobacterium extorquens).